Here is a 435-residue protein sequence, read N- to C-terminus: Glutamine synthetase (435 aa).

Residues 12–94 (KGVKYFMISY…VAADCIMDDA (83 aa)) form the GS beta-grasp domain. Residues 100-435 (PRVVLKKLVA…EWEHQTTLDV (336 aa)) enclose the GS catalytic domain. Mg(2+) contacts are provided by Glu123, Glu125, Glu180, and Glu187. Gly232 contributes to the L-glutamate binding site. Position 236 (His236) interacts with Mg(2+). Residue Ser240 participates in ATP binding. 2 residues coordinate L-glutamate: Arg291 and Arg315. Arg315 and Arg320 together coordinate ATP. Glu328 serves as a coordination point for Mg(2+). Arg330 is an L-glutamate binding site.

This sequence belongs to the glutamine synthetase family. In terms of assembly, homooctamer. It depends on Mg(2+) as a cofactor.

The catalysed reaction is L-glutamate + NH4(+) + ATP = L-glutamine + ADP + phosphate + H(+). Its activity is regulated as follows. Inhibited by methionine sulfoximine, ADP and pyrophosphate, but not by various nitrogen-containing metabolites that inhibit other GS enzymes. Its function is as follows. Catalyzes the ATP-dependent biosynthesis of glutamine from glutamate and ammonia. The sequence is that of Glutamine synthetase from Rhizobium meliloti (strain 1021) (Ensifer meliloti).